We begin with the raw amino-acid sequence, 173 residues long: MDVTIQHPWFKRPLGPFYPSRLFDQFFGEGLFEYDLLPFLSSTISPYYRQSLFRTVLDSGVSEVRSDRDKFVIFLDVKHFSPEDLTVKVQEDFVEIHGKHNERQDDHGYISREFHRRYRLPSNVDQSALSCSLSADGMLTFSGPKVQSGLDAGHSERAIPVSREEKPSSAPSS.

The residue at position 1 (methionine 1) is an N-acetylmethionine. A required for complex formation with BFSP1 and BFSP2 region spans residues 1-63; sequence MDVTIQHPWF…RTVLDSGVSE (63 aa). Glutamine 6 carries the deamidated glutamine; partial modification. Residue serine 45 is modified to Phosphoserine. Glutamine 50 bears the Deamidated glutamine; partial mark. The sHSP domain occupies 52 to 162; that stretch reads LFRTVLDSGV…GHSERAIPVS (111 aa). The residue at position 70 (lysine 70) is an N6-acetyllysine. Glutamine 90 bears the Deamidated glutamine; partial mark. N6-acetyllysine is present on lysine 99. Histidine 100 is a Zn(2+) binding site. Position 101 is a deamidated asparagine; partial (asparagine 101). Zn(2+) contacts are provided by glutamate 102 and histidine 107. Serine 122 carries the phosphoserine modification. Residue asparagine 123 is modified to Deamidated asparagine; partial. Residues 145-173 form a disordered region; sequence KVQSGLDAGHSERAIPVSREEKPSSAPSS. Deamidated glutamine; partial is present on glutamine 147. The segment covering 153 to 167 has biased composition (basic and acidic residues); that stretch reads GHSERAIPVSREEKP. Histidine 154 lines the Zn(2+) pocket. The O-linked (GlcNAc) serine glycan is linked to serine 162.

The protein belongs to the small heat shock protein (HSP20) family. Heteromer composed of three CRYAA and one CRYAB subunits. Inter-subunit bridging via zinc ions enhances stability, which is crucial as there is no protein turn over in the lens. Can also form homodimers and homotetramers (dimers of dimers) which serve as the building blocks of homooligomers. Within homooligomers, the zinc-binding motif is created from residues of 3 different molecules. His-100 and Glu-102 from one molecule are ligands of the zinc ion, and His-107 and His-154 residues from additional molecules complete the site with tetrahedral coordination geometry. Part of a complex required for lens intermediate filament formation composed of BFSP1, BFSP2 and CRYAA. Post-translationally, acetylation at Lys-70 may increase chaperone activity. In terms of processing, undergoes age-dependent proteolytical cleavage at the C-terminus.

It localises to the cytoplasm. It is found in the nucleus. In terms of biological role, contributes to the transparency and refractive index of the lens. Acts as a chaperone, preventing aggregation of various proteins under a wide range of stress conditions. Required for the correct formation of lens intermediate filaments as part of a complex composed of BFSP1, BFSP2 and CRYAA. This chain is Alpha-crystallin A chain (CRYAA), found in Eulemur fulvus fulvus (Brown lemur).